The primary structure comprises 585 residues: MAPMSIADLVAALPAEDTWGPATPSDNMLDGVPYAPFSKGDKLGRMADWTGDGKDRDRSGRQAYNRNYRDQQVYGAGTSSLFNIQVAEDESSFSVVDNTRTSTKRTFARGGGTVFRGRGQRGVGQRGGRAGFQRVGAGRGQGGDRYYDNRSARSNRGRRFGWKDYDKPQRTREPSVNVRPDWTMLEEVDFNRLSKLNLEAPEGEDLDSYGFLYYYDRSYDKAPVKNAERKLQALERAAYNVTTSQDPVIQELAEKNEATVFATSDILSMLMCAPRSVYSWDIVIVHQGDKIYFDKREGASIDLVTVNENAADAPVETADSSGKQESINTPSALALEATFINHNFALQTVVESEESKVTFNHPNPFYNAAEETEPLASKGYKYRRFDLSLQDDEEPLNMIVRTEVDAVMKNPVGGEDQHLIVKALNEFDSKAPGSGGALDWRSKLWSQRGAVVATEMKNNSIKLARWTTQAILAKADAMKLGFVSRANPRSATSHVILGVVGYKPREFAAQMNLNLGNGWGIVRTIVDRIRALDAEEEEDKVKKYVLIKDPNRPVIRLYSVPPNTFEEDDEAAEEQEEKAEDESEE.

A compositionally biased stretch (gly residues) spans 110-130 (GGGTVFRGRGQRGVGQRGGRA). The tract at residues 110–152 (GGGTVFRGRGQRGVGQRGGRAGFQRVGAGRGQGGDRYYDNRSA) is disordered. The interval 300–314 (SIDLVTVNENAADAP) is RNA gate. A disordered region spans residues 560 to 585 (VPPNTFEEDDEAAEEQEEKAEDESEE). The segment covering 565-585 (FEEDDEAAEEQEEKAEDESEE) has biased composition (acidic residues).

This sequence belongs to the eIF-3 subunit D family. In terms of assembly, component of the eukaryotic translation initiation factor 3 (eIF-3) complex.

It is found in the cytoplasm. Its function is as follows. mRNA cap-binding component of the eukaryotic translation initiation factor 3 (eIF-3) complex, which is involved in protein synthesis of a specialized repertoire of mRNAs and, together with other initiation factors, stimulates binding of mRNA and methionyl-tRNAi to the 40S ribosome. The eIF-3 complex specifically targets and initiates translation of a subset of mRNAs involved in cell proliferation. In the eIF-3 complex, eif3d specifically recognizes and binds the 7-methylguanosine cap of a subset of mRNAs. This Aspergillus fumigatus (strain CBS 144.89 / FGSC A1163 / CEA10) (Neosartorya fumigata) protein is Eukaryotic translation initiation factor 3 subunit D.